We begin with the raw amino-acid sequence, 118 residues long: MADDNVSFTDQGTAVGDEKKKGGSSAMLDMLGQLEKKETKKKGKKNKKSKKKAKKGKTKKVRKADKYESQNFLFRVEGAMFCAGIIVAMIMLFVIIIYGIITSSQTGGQFNRYMAPLF.

Over residues 1 to 12 (MADDNVSFTDQG) the composition is skewed to polar residues. The tract at residues 1–63 (MADDNVSFTD…KKGKTKKVRK (63 aa)) is disordered. Residues 39–63 (TKKKGKKNKKSKKKAKKGKTKKVRK) show a composition bias toward basic residues. The helical transmembrane segment at 81–101 (FCAGIIVAMIMLFVIIIYGII) threads the bilayer.

Its subcellular location is the membrane. This is an uncharacterized protein from Caenorhabditis elegans.